We begin with the raw amino-acid sequence, 52 residues long: DNA import protein CedA2 (52 aa).

2 consecutive transmembrane segments (helical) span residues Met1–Tyr21 and Ile27–Glu47.

As to quaternary structure, forms a complex composed of CedA, CedA1 and CedA2.

It is found in the cell membrane. Part of the Ced system, which is involved in DNA import. The polypeptide is DNA import protein CedA2 (Sulfolobus acidocaldarius (strain ATCC 33909 / DSM 639 / JCM 8929 / NBRC 15157 / NCIMB 11770)).